Consider the following 808-residue polypeptide: Phospholipase D alpha 1 (808 aa).

The 125-residue stretch at 1–125 (MAKTLLHGTL…LEGEEVDKWV (125 aa)) folds into the C2 domain. Residue Asp186 participates in Ca(2+) binding. The PLD phosphodiesterase 1 domain maps to 326-364 (TIFTHHQKIVVVDSEMPTSGSENRRVVSFVGGIDLCDGR). Residues His331, Lys333, and Asp338 contribute to the active site. An a 1,2-diacyl-sn-glycero-3-phosphate-binding site is contributed by His331. The Ca(2+) site is built by His370 and His404. The PLD phosphodiesterase 2 domain occupies 654–681 (FMIYVHAKMMIVDDEYIIIGSANINQRS). Catalysis depends on residues His659, Lys661, and Asp666. Residue His659 coordinates a 1,2-diacyl-sn-glycero-3-phosphate. Residue Glu720 participates in Ca(2+) binding.

It belongs to the phospholipase D family. C2-PLD subfamily. Ca(2+) serves as cofactor.

It carries out the reaction a 1,2-diacyl-sn-glycero-3-phosphocholine + H2O = a 1,2-diacyl-sn-glycero-3-phosphate + choline + H(+). Its function is as follows. Hydrolyzes glycerol-phospholipids at the terminal phosphodiesteric bond. Plays an important role in various cellular processes. The sequence is that of Phospholipase D alpha 1 (PLD1) from Spuriopimpinella brachycarpa (Chamnamul).